Here is a 441-residue protein sequence, read N- to C-terminus: Dolichyl-diphosphooligosaccharide--protein glycosyltransferase 48 kDa subunit (441 aa).

The first 28 residues, 1-28 (MKMVPRLAVRAWPLCGLLLAALGCVCAS), serve as a signal peptide directing secretion. Residues 29–412 (GPRTLVLLDN…YERFIPSAYP (384 aa)) are Lumenal-facing. The helical transmembrane segment at 413-432 (YYASAFSMMAGLFLFSVVFL) threads the bilayer. Over 433–441 (HMKEKEKSD) the chain is Cytoplasmic.

This sequence belongs to the DDOST 48 kDa subunit family. Component of the oligosaccharyltransferase (OST) complex. OST exists in two different complex forms which contain common core subunits RPN1, RPN2, OST48, OST4, DAD1 and TMEM258, either STT3A or STT3B as catalytic subunits, and form-specific accessory subunits. STT3A complex assembly occurs through the formation of 3 subcomplexes. Subcomplex 1 contains RPN1 and TMEM258, subcomplex 2 contains the STT3A-specific subunits STT3A, DC2/OSTC, and KCP2 as well as the core subunit OST4, and subcomplex 3 contains RPN2, DAD1, and OST48. The STT3A complex can form stable complexes with the Sec61 complex or with both the Sec61 and TRAP complexes. Interacts with SMIM22.

It localises to the endoplasmic reticulum membrane. It functions in the pathway protein modification; protein glycosylation. Its function is as follows. Subunit of the oligosaccharyl transferase (OST) complex that catalyzes the initial transfer of a defined glycan (Glc(3)Man(9)GlcNAc(2) in eukaryotes) from the lipid carrier dolichol-pyrophosphate to an asparagine residue within an Asn-X-Ser/Thr consensus motif in nascent polypeptide chains, the first step in protein N-glycosylation. N-glycosylation occurs cotranslationally and the complex associates with the Sec61 complex at the channel-forming translocon complex that mediates protein translocation across the endoplasmic reticulum (ER). All subunits are required for a maximal enzyme activity. Required for the assembly of both SST3A- and SS3B-containing OST complexes. This is Dolichyl-diphosphooligosaccharide--protein glycosyltransferase 48 kDa subunit from Rattus norvegicus (Rat).